A 1321-amino-acid chain; its full sequence is Lysine-specific demethylase 3A (1321 aa).

Phosphoserine occurs at positions 264 and 325. 3 disordered regions span residues 307–336 (ATPPSKDPRQQSTPQAANSPPNLGAKIPQG), 383–402 (LTEPKGSCTQPKTNTDQENR), and 438–472 (KHLEHAPSPSDVSNAPEVKAGVNSDSPNNCSGKKV). Residues 316 to 327 (QQSTPQAANSPP) show a composition bias toward polar residues. Serine 445 bears the Phosphoserine mark. A C6-type zinc finger spans residues 662-687 (CDVCDTTIFNLHWVCPRCGFGVCVDC). Serine 766 is subject to Phosphoserine. The LXXLL motif motif lies at 885-889 (LRNLL). At lysine 895 the chain carries N6-acetyllysine. The region spanning 1058-1281 (MPSRFDDLMA…HCFWLTQEFR (224 aa)) is the JmjC domain. Positions 1120, 1122, and 1249 each coordinate Fe cation.

The protein belongs to the JHDM2 histone demethylase family. As to quaternary structure, interacts with VRK1. Fe(2+) is required as a cofactor.

Its subcellular location is the cytoplasm. The protein resides in the nucleus. It catalyses the reaction N(6),N(6)-dimethyl-L-lysyl(9)-[histone H3] + 2 2-oxoglutarate + 2 O2 = L-lysyl(9)-[histone H3] + 2 formaldehyde + 2 succinate + 2 CO2. Histone demethylase that specifically demethylates 'Lys-9' of histone H3, thereby playing a central role in histone code. Preferentially demethylates mono- and dimethylated H3 'Lys-9' residue, with a preference for dimethylated residue, while it has weak or no activity on trimethylated H3 'Lys-9'. Demethylation of Lys residue generates formaldehyde and succinate. Involved in hormone-dependent transcriptional activation, by participating in recruitment to androgen-receptor target genes, resulting in H3 'Lys-9' demethylation and transcriptional activation. Involved in spermatogenesis by regulating expression of target genes such as PRM1 and TNP1 which are required for packaging and condensation of sperm chromatin. Involved in obesity resistance through regulation of metabolic genes such as PPARA and UCP1. The polypeptide is Lysine-specific demethylase 3A (KDM3A) (Homo sapiens (Human)).